A 60-amino-acid chain; its full sequence is Large ribosomal subunit protein bL32 (60 aa).

The protein belongs to the bacterial ribosomal protein bL32 family.

This Kosmotoga olearia (strain ATCC BAA-1733 / DSM 21960 / TBF 19.5.1) protein is Large ribosomal subunit protein bL32.